Consider the following 159-residue polypeptide: Transcription elongation factor GreA (159 aa).

Residues 3-37 (TNKEVVLTYEGLQKLEQELENLKTVKRREVAERIK) are a coiled coil.

Belongs to the GreA/GreB family.

Necessary for efficient RNA polymerase transcription elongation past template-encoded arresting sites. The arresting sites in DNA have the property of trapping a certain fraction of elongating RNA polymerases that pass through, resulting in locked ternary complexes. Cleavage of the nascent transcript by cleavage factors such as GreA or GreB allows the resumption of elongation from the new 3'terminus. GreA releases sequences of 2 to 3 nucleotides. The polypeptide is Transcription elongation factor GreA (Acetivibrio thermocellus (strain ATCC 27405 / DSM 1237 / JCM 9322 / NBRC 103400 / NCIMB 10682 / NRRL B-4536 / VPI 7372) (Clostridium thermocellum)).